The following is a 374-amino-acid chain: F-box/kelch-repeat protein At2g24250 (374 aa).

The region spanning 14-63 is the F-box domain; that stretch reads PDWSQLPEELLHIISTHLEDHYFDAVHARSVCRSWRSTFPFPSSLLRQSY. Kelch repeat units lie at residues 100 to 150 and 249 to 301; these read SEYF…PLGH and NFLV…LGNF.

This Arabidopsis thaliana (Mouse-ear cress) protein is F-box/kelch-repeat protein At2g24250.